Consider the following 310-residue polypeptide: Imidazolonepropionase (310 aa).

4-imidazolone-5-propanoate contacts are provided by Tyr42 and His75. Residue Tyr42 coordinates N-formimidoyl-L-glutamate. A Fe(3+)-binding site is contributed by His140. His140 lines the Zn(2+) pocket. Glu143 is a 4-imidazolone-5-propanoate binding site. Fe(3+) is bound at residue Asp215. Asp215 contributes to the Zn(2+) binding site. Positions 217 and 219 each coordinate N-formimidoyl-L-glutamate. Ser220 provides a ligand contact to 4-imidazolone-5-propanoate.

This sequence belongs to the metallo-dependent hydrolases superfamily. HutI family. The cofactor is Zn(2+). It depends on Fe(3+) as a cofactor.

The protein localises to the cytoplasm. The enzyme catalyses 4-imidazolone-5-propanoate + H2O = N-formimidoyl-L-glutamate. It functions in the pathway amino-acid degradation; L-histidine degradation into L-glutamate; N-formimidoyl-L-glutamate from L-histidine: step 3/3. Functionally, catalyzes the hydrolytic cleavage of the carbon-nitrogen bond in imidazolone-5-propanoate to yield N-formimidoyl-L-glutamate. It is the third step in the universal histidine degradation pathway. The protein is Imidazolonepropionase (hutI) of Streptococcus gordonii.